The sequence spans 200 residues: NADH-quinone oxidoreductase subunit B (200 aa).

Positions 79, 80, 144, and 174 each coordinate [4Fe-4S] cluster.

This sequence belongs to the complex I 20 kDa subunit family. NDH-1 is composed of 14 different subunits. Subunits NuoB, C, D, E, F, and G constitute the peripheral sector of the complex. [4Fe-4S] cluster is required as a cofactor.

The protein resides in the cell inner membrane. The catalysed reaction is a quinone + NADH + 5 H(+)(in) = a quinol + NAD(+) + 4 H(+)(out). Its function is as follows. NDH-1 shuttles electrons from NADH, via FMN and iron-sulfur (Fe-S) centers, to quinones in the respiratory chain. The immediate electron acceptor for the enzyme in this species is believed to be ubiquinone. Couples the redox reaction to proton translocation (for every two electrons transferred, four hydrogen ions are translocated across the cytoplasmic membrane), and thus conserves the redox energy in a proton gradient. The protein is NADH-quinone oxidoreductase subunit B of Caulobacter vibrioides (strain NA1000 / CB15N) (Caulobacter crescentus).